The following is a 400-amino-acid chain: Acetate kinase (400 aa).

Asparagine 7 lines the Mg(2+) pocket. Lysine 14 contributes to the ATP binding site. Arginine 91 provides a ligand contact to substrate. The active-site Proton donor/acceptor is the aspartate 148. ATP-binding positions include 208–212 (HLGNG), 284–286 (DMR), and 332–336 (GVGEN). Glutamate 384 contacts Mg(2+).

This sequence belongs to the acetokinase family. As to quaternary structure, homodimer. Requires Mg(2+) as cofactor. Mn(2+) serves as cofactor.

Its subcellular location is the cytoplasm. It carries out the reaction acetate + ATP = acetyl phosphate + ADP. The protein operates within metabolic intermediate biosynthesis; acetyl-CoA biosynthesis; acetyl-CoA from acetate: step 1/2. Its function is as follows. Catalyzes the formation of acetyl phosphate from acetate and ATP. Can also catalyze the reverse reaction. This is Acetate kinase from Coprothermobacter proteolyticus (strain ATCC 35245 / DSM 5265 / OCM 4 / BT).